Reading from the N-terminus, the 233-residue chain is Biosynthetic peptidoglycan transglycosylase (233 aa).

Residues 8 to 28 (LIALPVGIFIFFNAYVYGNII) traverse the membrane as a helical segment.

Belongs to the glycosyltransferase 51 family.

Its subcellular location is the cell inner membrane. It catalyses the reaction [GlcNAc-(1-&gt;4)-Mur2Ac(oyl-L-Ala-gamma-D-Glu-L-Lys-D-Ala-D-Ala)](n)-di-trans,octa-cis-undecaprenyl diphosphate + beta-D-GlcNAc-(1-&gt;4)-Mur2Ac(oyl-L-Ala-gamma-D-Glu-L-Lys-D-Ala-D-Ala)-di-trans,octa-cis-undecaprenyl diphosphate = [GlcNAc-(1-&gt;4)-Mur2Ac(oyl-L-Ala-gamma-D-Glu-L-Lys-D-Ala-D-Ala)](n+1)-di-trans,octa-cis-undecaprenyl diphosphate + di-trans,octa-cis-undecaprenyl diphosphate + H(+). The protein operates within cell wall biogenesis; peptidoglycan biosynthesis. Functionally, peptidoglycan polymerase that catalyzes glycan chain elongation from lipid-linked precursors. The chain is Biosynthetic peptidoglycan transglycosylase from Neisseria meningitidis serogroup B (strain ATCC BAA-335 / MC58).